The following is an 882-amino-acid chain: MKKQIGDRYEPKDVENKWISLWEKKKSFAPNSNARESFSIVIPPPNVTGSLHIGHALNHTIQDILVRIERKKGKSTLWLPGMDHAGIATQMVVERELAKESKKRTDFTREEFIHKVWEWKNHSGGMITKQQKLLGESVDWSRERFTLDEGLSKAVFKVFKSLYDEGLIYRGERIINWCPASQTAISDLEVEFRETKGKLYHIKYPIHGKKDQFLVVATTRPETMLGDVAVCANPEDERYTSLKDVVLDLPLTNRQIPLLFDSFVDKEFGSGLVKITPAHDANDFEAGQRLGLKPLLVMNPNGTMNENAGIYQGLDRFEARKKVLADLEAKGLIEKIEDHIHAVGHNSRGGAVIEPYLSTQWFVKIKPLADLAVQAVQSGQVEFIPKMWEKTFFEWMNNIRDWCISRQLWWGHRIPAYHCKKCKHFEVSETAVTVCTSCGSQEVEPDPDVLDTWFSSQLWPFSTLGWPDQTEDLKRYYPTSVLVTGFDIIFFWVSRMIMMGMKFMQAPPFHKVLIHGLVRDKDGKKFSKSVGNVIDPLVMMDKYGTDSFRFFLAATLPEGKDILFDESRLDGYRSFCNKIWNSSRFILMNLEESFVPIGITPDIEKDLEPMDQWILSRFNHCLEEYNKAHSKFHFYEMAAAIYEFIWGDFCDWYIELVKPRAYGKVSPRSAEVAKQVLSDVLIRALGLLHPFMPFLTEEVHSVFSDQYIVTTPFPESYPVASDSLGVQKLNLLQEIVTKIRVMRSENGVAPDKKCKVIVKSSDNLSSSTILENEVSLLQLARLESIRIDTLYEIQKTDSVSHFTKGEIVLPLEGLIDVAKEKARLEKELQKSELEKEKLEIKLSNPGFLSKAAPEVVEKERDKLKTLIDKVEVLKKGIQNLAG.

The short motif at 45 to 55 (PNVTGSLHIGH) is the 'HIGH' region element. The short motif at 525–529 (KFSKS) is the 'KMSKS' region element. Lysine 528 contributes to the ATP binding site. Positions 812–881 (EGLIDVAKEK…VLKKGIQNLA (70 aa)) form a coiled coil.

It belongs to the class-I aminoacyl-tRNA synthetase family. ValS type 1 subfamily. Monomer.

It is found in the cytoplasm. It carries out the reaction tRNA(Val) + L-valine + ATP = L-valyl-tRNA(Val) + AMP + diphosphate. Functionally, catalyzes the attachment of valine to tRNA(Val). As ValRS can inadvertently accommodate and process structurally similar amino acids such as threonine, to avoid such errors, it has a 'posttransfer' editing activity that hydrolyzes mischarged Thr-tRNA(Val) in a tRNA-dependent manner. In Leptospira interrogans serogroup Icterohaemorrhagiae serovar copenhageni (strain Fiocruz L1-130), this protein is Valine--tRNA ligase.